The sequence spans 937 residues: MPAILDKILRIGEGKILRQLEAIAQAVNAIEDDFVAMSDAELQGMTAEFKERLANGESLDDIMPEAFATVREAARRVIGLRPFDVQVMGAGALHMGNIAEMKTGEGKTLVAVLPSYLNALSGKGVHIVTVNDYLAKFQSEMMGRVHHFLGLTVGVILPEMRPDERRVAYNCDITYGTNNELGFDYLRDNMAGSIEECVQRGHNFAIVDEVDSILIDEARTPLIISGPTQDEVHWYAEFAKVARNLVRDEDYEVDEKKRTISVLEPGITKVEDHLGIENLYESANTPLISFLHNSIKAKELFHNDKEYVVLNGEVLIVDEHTGRMLAGRRYNDGLHQAIEAKEDVQVREEYQTLATVTLQNYFRLYDKLSGMTGTAMTEASEFDKIYKLGVVPIPTNKPMARKDQADLVYRTEEAKYEAVVEDIAERHEKGQPILVGTVSVEKSEHLSAKLKKRGIPHSVLNAKVHADEAKIVALAGHKGAVTVATNMAGRGTDIMLGGSVEFLADAELRKRGLEPAGETADEYQAEWPGTVERIKSQVANEHDEVRALGGLYVVGTERHESRRIDNQLRGRSGRQGDPGESRFYLSLQDELMRLFKSDWVDRVLQVLKIPDDVPIENKRVTSAIANAQGQVESQNFESRKNVLKYDDVMDRQRKVIYAERREVLEGKDLQDQIRTFIDDTVTGYVTGATEEFAEEWDLEALWTALRQIYPVGVDYRVLEEEAGGRANMDRDELIAVLQKDAHEAYDRREAEVGETVMRELERRVVLSVLDRKWREHLYEMDYLREGIYLRAYSQRDPLVEYQREGFEMFAAMMDGIKEESVGFLFNLEVQVEIEEEDEEEEEVLEPMRQPVPSFDQQGAMPQIRAKGLERPSQPTKLAYSAPSEDGDAEVKGATVTNADDEFAGVGRNDRCPCGSGKKFKQCHGRPGGPTGLTARVS.

ATP contacts are provided by residues glutamine 86, 104–108 (GEGKT), and aspartate 493. The segment at 868–889 (LERPSQPTKLAYSAPSEDGDAE) is disordered. Zn(2+) is bound by residues cysteine 911, cysteine 913, cysteine 922, and histidine 923. Positions 915–937 (SGKKFKQCHGRPGGPTGLTARVS) are disordered.

This sequence belongs to the SecA family. Monomer and homodimer. Part of the essential Sec protein translocation apparatus which comprises SecA, SecYEG and auxiliary proteins SecDF. Other proteins may also be involved. The cofactor is Zn(2+).

Its subcellular location is the cell membrane. The protein resides in the cytoplasm. The catalysed reaction is ATP + H2O + cellular proteinSide 1 = ADP + phosphate + cellular proteinSide 2.. Part of the Sec protein translocase complex. Interacts with the SecYEG preprotein conducting channel. Has a central role in coupling the hydrolysis of ATP to the transfer of proteins into and across the cell membrane, serving as an ATP-driven molecular motor driving the stepwise translocation of polypeptide chains across the membrane. This chain is Protein translocase subunit SecA, found in Nocardioides sp. (strain ATCC BAA-499 / JS614).